Reading from the N-terminus, the 278-residue chain is Large ribosomal subunit protein uL2 (278 aa).

Disordered regions lie at residues 1-20 (MGIR…SVSD) and 225-278 (VMNP…GKKR). Residues 258-278 (RNKKKASSRLIVRRRKSGKKR) are compositionally biased toward basic residues.

It belongs to the universal ribosomal protein uL2 family. In terms of assembly, part of the 50S ribosomal subunit. Forms a bridge to the 30S subunit in the 70S ribosome.

One of the primary rRNA binding proteins. Required for association of the 30S and 50S subunits to form the 70S ribosome, for tRNA binding and peptide bond formation. It has been suggested to have peptidyltransferase activity; this is somewhat controversial. Makes several contacts with the 16S rRNA in the 70S ribosome. In Cutibacterium acnes (strain DSM 16379 / KPA171202) (Propionibacterium acnes), this protein is Large ribosomal subunit protein uL2.